The primary structure comprises 317 residues: Phospholipase A1 1 (317 aa).

An N-terminal signal peptide occupies residues 1–7; the sequence is RLIMFVG. The propeptide occupies 8 to 17; sequence DPSSSNELDR. Residues Cys-21 and Cys-104 are joined by a disulfide bond. N-linked (GlcNAc...) asparagine glycosylation occurs at Asn-25. Ser-154 (nucleophile) is an active-site residue. Catalysis depends on Asp-182, which acts as the Charge relay system. Residues Cys-193 and Cys-198 are joined by a disulfide bond. The N-linked (GlcNAc...) asparagine glycan is linked to Asn-229. The cysteines at positions 236 and 244 are disulfide-linked. The active-site Charge relay system is His-246. Disulfide bonds link Cys-261/Cys-285, Cys-262/Cys-310, and Cys-278/Cys-283.

This sequence belongs to the AB hydrolase superfamily. Lipase family. As to expression, expressed by the venom gland.

The protein localises to the secreted. It carries out the reaction a 1,2-diacyl-sn-glycero-3-phosphocholine + H2O = a 2-acyl-sn-glycero-3-phosphocholine + a fatty acid + H(+). Functionally, catalyzes the hydrolysis of phosphatidylcholine with phospholipase A1 activity. May act as an allergen and induce hemolytic activity. This Dolichovespula maculata (Bald-faced hornet) protein is Phospholipase A1 1.